Consider the following 390-residue polypeptide: Guanidine hydrolase (390 aa).

Residues H174, D199, H201, D203, D291, and D293 each coordinate Ni(2+).

The protein belongs to the arginase family. As to quaternary structure, homohexamer. It depends on Ni(2+) as a cofactor.

It localises to the cytoplasm. It catalyses the reaction guanidine + H2O = urea + NH4(+). Its activity is regulated as follows. Activation of GdmH depends on the presence of the accessory proteins GhaA (Sll1078) and GhaB (Sll1079), which load nickel into the active site. Hydrolase activity is slightly activated in the presence of GTP. It does not require ATP or NAD(P)H. Addition of Ca(2+), Mn(2+), Fe(2+) or Fe(3+) has no consistent effects, whereas addition of Co(2+), Cu(2+) or Zn(2+) inhibits the activity. Catalyzes the hydrolysis of guanidine into urea and ammonium. Is highly specific for free guanidine. At pH 8, also catalyzes the release of urea from methylguanidine but with significantly reduced specific activity compared with that for guanidine. Cannot hydrolyze guanidinoacetate, guanidinopropionate, guanidinobutyrate, agmatine, arginine or creatine. Required to use guanidine as the sole nitrogen source for growth. Overexpression of the gene accelerates guanidine degradation and promotes biomass growth. In Synechocystis sp. (strain ATCC 27184 / PCC 6803 / Kazusa), this protein is Guanidine hydrolase.